We begin with the raw amino-acid sequence, 298 residues long: Transcription factor SRM1 (298 aa).

Positions 7–62 constitute an SANT domain; it reads SDGSVWSREDDIAFERALANNTDESEERWEKIAADVPGKSVEQIKEHYELLVEDVT. The tract at residues 68-118 is disordered; the sequence is CVPLPAYGSPEGSNGHAGDEGASSKKGGNSHAGESNQAGKSKSDQERRKGI. Over residues 108-118 the composition is skewed to basic and acidic residues; sequence SKSDQERRKGI. One can recognise an HTH myb-type domain in the interval 111-168; the sequence is DQERRKGIAWTEDEHRLFLLGLDKYGKGDWRSISRNFVVTRTPTQVASHAQKYFIRLN. Positions 140–164 form a DNA-binding region, H-T-H motif; the sequence is WRSISRNFVVTRTPTQVASHAQKYF. Residues 182–200 are compositionally biased toward polar residues; it reads ITSVGNADVSTPQGPITGQ. A disordered region spans residues 182 to 245; that stretch reads ITSVGNADVS…GPPMYGTPAI (64 aa). Residues 201–215 are compositionally biased toward low complexity; sequence NNSNNNNNNNNNNSS.

In terms of tissue distribution, expressed in young seedlings, developing leaves, sepals and trichomes.

It is found in the nucleus. Functionally, transcription activator that coordinates abscisic acid (ABA) biosynthesis and signaling-related genes via binding to the specific promoter motif 5'-(A/T)AACCAT-3'. Represses ABA-mediated salt (e.g. NaCl and KCl) stress tolerance. Regulates leaf shape and promotes vegetative growth. In Arabidopsis thaliana (Mouse-ear cress), this protein is Transcription factor SRM1.